The primary structure comprises 208 residues: Outer-membrane lipoprotein carrier protein (208 aa).

Positions 1 to 21 (MRLIRTLFVAALAMGASLAHA) are cleaved as a signal peptide.

This sequence belongs to the LolA family. Monomer.

The protein resides in the periplasm. Participates in the translocation of lipoproteins from the inner membrane to the outer membrane. Only forms a complex with a lipoprotein if the residue after the N-terminal Cys is not an aspartate (The Asp acts as a targeting signal to indicate that the lipoprotein should stay in the inner membrane). This Pseudomonas aeruginosa (strain UCBPP-PA14) protein is Outer-membrane lipoprotein carrier protein.